We begin with the raw amino-acid sequence, 496 residues long: Serine/threonine-protein kinase Sgk3 (496 aa).

A PX domain is found at 12–124 (SCPSVSIPSS…AFLQMDSPRH (113 aa)). Residues 121 to 157 (SPRHQSDPSEDEDERSTSKPHSTSRNINLGPTGNPHA) form a disordered region. Residues serine 126 and serine 129 each carry the phosphoserine modification. Polar residues predominate over residues 139–151 (KPHSTSRNINLGP). One can recognise a Protein kinase domain in the interval 162-419 (FDFLKVIGKG…FLEIQNHPFF (258 aa)). ATP-binding positions include 168-176 (IGKGSFGKV) and lysine 191. A Nuclear localization signal motif is present at residues 195–205 (KKIVLNRKEQK). Aspartate 286 acts as the Proton acceptor in catalysis. A Phosphothreonine; by PDPK1 modification is found at threonine 320. Residues 420 to 496 (ESLSWTDLVQ…YAPPSEDLFL (77 aa)) form the AGC-kinase C-terminal domain. At serine 486 the chain carries Phosphoserine.

Belongs to the protein kinase superfamily. AGC Ser/Thr protein kinase family. In terms of assembly, interacts with GSK3B and FLII. Interacts with PDPK1 in a phosphorylation-dependent manner. In terms of processing, activated by phosphorylation on Ser-486 by an unknown kinase (may be mTORC2 but not confirmed), transforming it into a substrate for PDPK1 which then phosphorylates it on Thr-320. Widely expressed, predominantly in the heart, spleen and 7-day embryo.

The protein localises to the cytoplasmic vesicle. It localises to the early endosome. The protein resides in the recycling endosome. The catalysed reaction is L-seryl-[protein] + ATP = O-phospho-L-seryl-[protein] + ADP + H(+). It catalyses the reaction L-threonyl-[protein] + ATP = O-phospho-L-threonyl-[protein] + ADP + H(+). Two specific sites, one in the kinase domain (Thr-320) and the other in the C-terminal regulatory region (Ser-486), need to be phosphorylated for its full activation. Its function is as follows. Serine/threonine-protein kinase which is involved in the regulation of a wide variety of ion channels, membrane transporters, cell growth, proliferation, survival and migration. Up-regulates Na(+) channels: SCNN1A/ENAC and SCN5A, K(+) channels: KCNA3/KV1.3, KCNE1, KCNQ1 and KCNH2/HERG, epithelial Ca(2+) channels: TRPV5 and TRPV6, chloride channel: BSND, creatine transporter: SLC6A8, Na(+)/dicarboxylate cotransporter: SLC13A2/NADC1, Na(+)-dependent phosphate cotransporter: SLC34A2/NAPI-2B, amino acid transporters: SLC1A5/ASCT2 and SLC6A19, glutamate transporters: SLC1A3/EAAT1, SLC1A6/EAAT4 and SLC1A7/EAAT5, glutamate receptors: GRIA1/GLUR1 and GRIK2/GLUR6, Na(+)/H(+) exchanger: SLC9A3/NHE3, and the Na(+)/K(+) ATPase. Plays a role in the regulation of renal tubular phosphate transport and bone density. Phosphorylates NEDD4L and GSK3B. Positively regulates ER transcription activity through phosphorylation of FLII. Negatively regulates the function of ITCH/AIP4 via its phosphorylation and thereby prevents CXCR4 from being efficiently sorted to lysosomes. In Mus musculus (Mouse), this protein is Serine/threonine-protein kinase Sgk3 (Sgk3).